A 502-amino-acid chain; its full sequence is ATP synthase subunit alpha (502 aa).

The interval 115-136 (VDGLGPIHTTKTRPIESPAPGV) is disordered. An ATP-binding site is contributed by 169 to 176 (GDRQTGKT).

This sequence belongs to the ATPase alpha/beta chains family. In terms of assembly, F-type ATPases have 2 components, CF(1) - the catalytic core - and CF(0) - the membrane proton channel. CF(1) has five subunits: alpha(3), beta(3), gamma(1), delta(1), epsilon(1). CF(0) has three main subunits: a(1), b(2) and c(9-12). The alpha and beta chains form an alternating ring which encloses part of the gamma chain. CF(1) is attached to CF(0) by a central stalk formed by the gamma and epsilon chains, while a peripheral stalk is formed by the delta and b chains.

Its subcellular location is the cell membrane. The enzyme catalyses ATP + H2O + 4 H(+)(in) = ADP + phosphate + 5 H(+)(out). Functionally, produces ATP from ADP in the presence of a proton gradient across the membrane. The alpha chain is a regulatory subunit. The protein is ATP synthase subunit alpha of Bacillus cytotoxicus (strain DSM 22905 / CIP 110041 / 391-98 / NVH 391-98).